Here is a 119-residue protein sequence, read N- to C-terminus: Polyhedrin (119 aa).

It belongs to the polyhedrin family.

Major component of the virus occlusion bodies, which are large proteinaceous structures (polyhedra), that protect the virus from the outside environment for extended periods until they are ingested by insect larvae. In Antheraea pernyi nuclear polyhedrosis virus (ApNPV), this protein is Polyhedrin (PH).